Here is an 815-residue protein sequence, read N- to C-terminus: Polyribonucleotide nucleotidyltransferase (815 aa).

Mg(2+) is bound by residues D489 and D495. In terms of domain architecture, KH spans 556 to 615 (PRFYTLQIPTDKIRDLIGPGGKVIRGIVEATGVKIDVEDSGKVNVASSDQEAAKKALKMI). Positions 625 to 692 (GKTYLGTVTR…DGNRIKLSRK (68 aa)) constitute an S1 motif domain. The segment at 700–815 (AKMATEGGGD…GGGGGGRGRG (116 aa)) is disordered. Positions 723 to 734 (APGGVTFEGGYE) are enriched in gly residues. The segment covering 735-745 (GGDEPEVEEGE) has biased composition (acidic residues). Residues 775-815 (PHGGGGGAGRGGRGRRPGGGGGGGRGGHGGRGGGGGGRGRG) are compositionally biased toward gly residues.

This sequence belongs to the polyribonucleotide nucleotidyltransferase family. Mg(2+) serves as cofactor.

It localises to the cytoplasm. The catalysed reaction is RNA(n+1) + phosphate = RNA(n) + a ribonucleoside 5'-diphosphate. In terms of biological role, involved in mRNA degradation. Catalyzes the phosphorolysis of single-stranded polyribonucleotides processively in the 3'- to 5'-direction. The protein is Polyribonucleotide nucleotidyltransferase of Koribacter versatilis (strain Ellin345).